Consider the following 457-residue polypeptide: MQKYISEARLLLALAIPVILAQIAQTAMGFVDTVMAGGYSATDMAAVAIGTSIWLPAILFGHGLLLALTPVIAQLNGSGRRERIAHQVRQGFWLAGFVSVLIMLVLWNAGYIIRSMENIDPALAEKAVGYLRALLWGAPGYLFFQVARNQCEGLAKTKPGMVMGFIGLLVNIPVNYIFIYGHFGMPELGGVGCGVATAAVYWVMFLAMVSYIKRARSMRDIRNEKGTAKPDPAVMKRLIQLGLPIALALFFEVTLFAVVALLVSPLGIVDVAGHQIALNFSSLMFVLPMSLAAAVTIRVGYRLGQGSTLDAQTAARTGLMVGVCMATLTAIFTVSLREQIALLYNDNPEVVTLAAHLMLLAAVYQISDSIQVIGSGILRGYKDTRSIFYITFTAYWVLGLPSGYILALTDLVVEPMGPAGFWIGFIIGLTSAAIMMMLRMRFLQRMPSAIILQRASR.

The next 12 helical transmembrane spans lie at 11–31 (LLAL…MGFV), 53–73 (IWLP…PVIA), 93–113 (WLAG…GYII), 127–147 (AVGY…FQVA), 160–180 (GMVM…IFIY), 189–209 (GGVG…LAMV), 243–263 (LPIA…ALLV), 276–296 (IALN…AAVT), 314–334 (AART…IFTV), 350–370 (VVTL…SDSI), 387–407 (IFYI…YILA), and 418–438 (PAGF…MMML).

This sequence belongs to the multi antimicrobial extrusion (MATE) (TC 2.A.66.1) family. MdtK subfamily.

The protein localises to the cell inner membrane. Its function is as follows. Multidrug efflux pump that functions probably as a Na(+)/drug antiporter. The protein is Multidrug resistance protein MdtK of Escherichia coli O9:H4 (strain HS).